We begin with the raw amino-acid sequence, 503 residues long: MDLIPNFSMETWMLLATSLVLLYLYGTHSHGIFKKLGIPGPKPLPFLGTILAYQKGFWECDIQCHKKYGKMWGLYDGRQPVLAITDPDIIKTVLVKECYSTFTNRRRFGPVGILKKAISISENEEWKRIRALLSPTFTSGRLKEMFPIINQFTDVLVRNMRQGLGEGKPTSMKDIFGAYSMDVITATSFGVNIDSLNNPQDPFVEKIKKLLKFDIFDPLFLSVTLFPFLTPVFDALNVSLFPRDVISFFTTSVERMKENRMKEKEKQRVDFLQLMINSQNYKTKESHKALSDVEIVAQSVIFIFAGYETTSSALSFALYLLAIHPDVQKKLQDEIDAALPNKAPATYDTLLQMEYLDMVVNETLRLYPIAGRLERVCKTDVEINGLFIPKGTVVMIPTFALHKDPKYWPEPEEFRPERFSKKNQDSINPYMYLPFGSGPRNCIGMRFALINMKVALVRVLQNFTVQPCKETEIPLKLSKQGLLQPENPLLLKVVSRDETVSDE.

Cys-442 lines the heme pocket.

It belongs to the cytochrome P450 family. The cofactor is heme.

It localises to the endoplasmic reticulum membrane. Its subcellular location is the microsome membrane. It catalyses the reaction an organic molecule + reduced [NADPH--hemoprotein reductase] + O2 = an alcohol + oxidized [NADPH--hemoprotein reductase] + H2O + H(+). Can activate aflatoxin B1 to a genotoxic product. The protein is Cytochrome P450 3A13 (Cyp3a13) of Mus musculus (Mouse).